The primary structure comprises 471 residues: Transcription initiation factor TFIID subunit 7-like (471 aa).

3 disordered regions span residues 1–84 (MERG…RQGT), 192–211 (SPEG…TGPT), and 328–377 (EMMG…EELE). A Phosphoserine modification is found at S199. Residues 347-377 (GDDDDDEDEDDEDYGNEKEEEETDNSEEELE) show a composition bias toward acidic residues. Positions 358-433 (EDYGNEKEEE…QKELLRKVEN (76 aa)) form a coiled coil.

Belongs to the TAF7 family. TFIID is composed of TATA binding protein (TBP) and a number of TBP-associated factors (TAFs). TAF7L may replace TAF7 in a spermatogenesis-specific form of TFIID. Interacts with TBP; the interaction occurs in a sub-population of cells (pachytene and haploid round spermatids) and is developmentally regulated through differential intracellular localization of the two proteins. Interacts with TAF1. In terms of tissue distribution, testis-specific (at protein level). Expressed during spermatogenesis from spermatogonia stage up to the stage of round spermatids.

Its subcellular location is the nucleus. It localises to the cytoplasm. Its function is as follows. Probably functions as a spermatogenesis-specific component of the DNA-binding general transcription factor complex TFIID, a multimeric protein complex that plays a central role in mediating promoter responses to various activators and repressors. May play a role in spermatogenesis. In Mus musculus (Mouse), this protein is Transcription initiation factor TFIID subunit 7-like (Taf7l).